The following is a 312-amino-acid chain: Tumor necrosis factor receptor type 1-associated DEATH domain protein (312 aa).

A Nuclear export signal motif is present at residues 147 to 163 (LRDEELAELEDALRNLK). The interval 170 to 195 (GGDGEVASAPLQPPVPSLSEVKPPPP) is disordered. In terms of domain architecture, Death spans 179 to 289 (PLQPPVPSLS…ATLQRLVEAL (111 aa)). Residues 180–195 (LQPPVPSLSEVKPPPP) show a composition bias toward pro residues. Positions 222-289 (FARSVGLKWR…ATLQRLVEAL (68 aa)) are interaction with KRT14 and KRT18. The Nuclear localization signal motif lies at 231–244 (RKVGRSLQRGCRAL). 2 (Microbial infection) N-beta-linked (GlcNAc) arginine glycosylation sites follow: Arg-235 and Arg-245.

In terms of assembly, stimulation of TNF-alpha receptor TNFRSF1A leads to the formation of two distinct signaling complexes. Plasma membrane-bound complex I is composed of TNFRSF1A, TRADD, RIPK1, TRAF2 and BIRC2/c-IAP1 or BIRC3 which interacts with CHUCK/IKK-alpha, IKBKB/IKK-beta and IKBKG/IKK-gamma promoting cell survival. Subsequently, TRADD, RIPK1 and TRAF2 dissociate from TNFRSF1A and form cytoplasmic complex II with FADD and caspase CASP8 promoting cell apoptosis. Within complex I, interacts with TNFRSF1A/TNFR1, TRAF2 and kinase RIPK1. Within complex I, interacts with TRPC4AP; the interaction promotes NF-kappa B activation. UXT1 associates with complex I; the interaction prevents the formation of complex II. Within complex I Interacts with scaffold protein DAB2IP. Interacts with autophagy receptor SQSTM1. Interacts with E3 ligase TRIP12. Interacts with kinase HIPK2. Interacts with keratin KRT14. Interacts with keratin KRT18. Interacts with keratins KRT16 and KRT17. Interacts with FADD. Interacts with TOMM70. Interacts with TMC8; the interaction impairs the formation of complex I and facilites complex II formation. (Microbial infection) Glycosylated at Arg-235 by enteropathogenic E.coli protein NleB1, C.rodentium protein NleB and S.typhimurium proteins Ssek1 and Ssek3: arginine GlcNAcylation prevents homotypic/heterotypic death domain interactions and assembly of the oligomeric TNFRSF1A/TNFR1 complex, thereby disrupting TNF signaling. In terms of tissue distribution, found in all examined tissues.

The protein localises to the nucleus. It is found in the cytoplasm. Its subcellular location is the cytoskeleton. Its function is as follows. Adapter molecule for TNFRSF1A/TNFR1 that specifically associates with the cytoplasmic domain of activated TNFRSF1A/TNFR1 mediating its interaction with FADD. Overexpression of TRADD leads to two major TNF-induced responses, apoptosis and activation of NF-kappa-B. The nuclear form acts as a tumor suppressor by preventing ubiquitination and degradation of isoform p19ARF/ARF of CDKN2A by TRIP12: acts by interacting with TRIP12, leading to disrupt interaction between TRIP12 and isoform p19ARF/ARF of CDKN2A. The sequence is that of Tumor necrosis factor receptor type 1-associated DEATH domain protein from Homo sapiens (Human).